The sequence spans 245 residues: Acetylglutamate kinase (245 aa).

Substrate is bound by residues 41–42 (GG), arginine 63, and asparagine 156.

Belongs to the acetylglutamate kinase family. ArgB subfamily.

The protein resides in the cytoplasm. The enzyme catalyses N-acetyl-L-glutamate + ATP = N-acetyl-L-glutamyl 5-phosphate + ADP. It functions in the pathway amino-acid biosynthesis; L-arginine biosynthesis; N(2)-acetyl-L-ornithine from L-glutamate: step 2/4. Functionally, catalyzes the ATP-dependent phosphorylation of N-acetyl-L-glutamate. The protein is Acetylglutamate kinase of Streptococcus gordonii (strain Challis / ATCC 35105 / BCRC 15272 / CH1 / DL1 / V288).